The sequence spans 177 residues: Peroxiredoxin-2 (177 aa).

N-acetylalanine is present on A2. In terms of domain architecture, Thioredoxin spans A6–Y164. C51 functions as the Cysteine sulfenic acid (-SOH) intermediate in the catalytic mechanism. S112 bears the Phosphoserine mark.

The protein belongs to the peroxiredoxin family. AhpC/Prx1 subfamily. As to quaternary structure, homodimer; disulfide-linked, upon oxidation. 5 homodimers assemble to form a ring-like decamer. Interacts with TIPIN. In terms of processing, the enzyme can be inactivated by further oxidation of the cysteine sulfenic acid (C(P)-SOH) to sulphinic acid (C(P)-SO2H) instead of its condensation to a disulfide bond. It can be reactivated by forming a transient disulfide bond with sulfiredoxin SRXN1, which reduces the cysteine sulfinic acid in an ATP- and Mg-dependent manner. Post-translationally, acetylation increases resistance to transition to high molecular-mass complexes. Deacetylated by HDAC6 which decreases reducing activity.

The protein resides in the cytoplasm. The enzyme catalyses a hydroperoxide + [thioredoxin]-dithiol = an alcohol + [thioredoxin]-disulfide + H2O. In terms of biological role, thiol-specific peroxidase that catalyzes the reduction of hydrogen peroxide and organic hydroperoxides to water and alcohols, respectively. Plays a role in cell protection against oxidative stress by detoxifying peroxides and as sensor of hydrogen peroxide-mediated signaling events. Might participate in the signaling cascades of growth factors and tumor necrosis factor-alpha by regulating the intracellular concentrations of H(2)O(2). The sequence is that of Peroxiredoxin-2 (PRDX2) from Pongo abelii (Sumatran orangutan).